A 113-amino-acid polypeptide reads, in one-letter code: Large ribosomal subunit protein uL22 (113 aa).

Belongs to the universal ribosomal protein uL22 family. Part of the 50S ribosomal subunit.

In terms of biological role, this protein binds specifically to 23S rRNA; its binding is stimulated by other ribosomal proteins, e.g. L4, L17, and L20. It is important during the early stages of 50S assembly. It makes multiple contacts with different domains of the 23S rRNA in the assembled 50S subunit and ribosome. Its function is as follows. The globular domain of the protein is located near the polypeptide exit tunnel on the outside of the subunit, while an extended beta-hairpin is found that lines the wall of the exit tunnel in the center of the 70S ribosome. This is Large ribosomal subunit protein uL22 from Halothermothrix orenii (strain H 168 / OCM 544 / DSM 9562).